The following is a 710-amino-acid chain: Early transcription factor 82 kDa subunit (710 aa).

The protein belongs to the poxviridae VETF large subunit family. In terms of assembly, heterodimer of a 70 kDa and a 82 kDa subunit. Part of the early transcription complex composed of ETF, RAP94/OPG109, and the DNA-directed RNA polymerase.

Its subcellular location is the virion. Its function is as follows. Acts with RNA polymerase to initiate transcription from early gene promoters. Is recruited by the RPO-associated protein of 94 kDa RAP94/OPG109 to form the early transcription complex, which also contains the core RNA polymerase. ETF heterodimer binds to early gene promoters. This Bos taurus (Bovine) protein is Early transcription factor 82 kDa subunit (OPG133).